Consider the following 709-residue polypeptide: MAQAHIQGSPCPLLPPGRMSWPQGALLLLWLFSPPLRAGGGGVAVTSAAGGGSPPATSCPAACSCSNQASRVICTRRELAEVPASIPVNTRYLNLQENSIQVIRTDTFKHLRHLEILQLSKNLVRKIEVGAFNGLPSLNTLELFDNRLTTVPTQAFEYLSKLRELWLRNNPIESIPSYAFNRVPSLRRLDLGELKRLEYISEAAFEGLVNLRYLNLGMCNLKDIPNLTALVRLEELELSGNRLDLIRPGSFQGLTSLRKLWLMHAQVATIERNAFDDLKSLEELNLSHNNLMSLPHDLFTPLHRLERVHLNHNPWHCNCDVLWLSWWLKETVPSNTTCCARCHAPAGLKGRYIGELDQSHFTCYAPVIVEPPTDLNVTEGMAAELKCRTGTSMTSVNWLTPNGTLMTHGSYRVRISVLHDGTLNFTNVTVQDTGQYTCMVTNSAGNTTASATLNVSAVDPVAAGGPGGGGPGGGGGAGGAGGYTYFTTVTVETLETQPGEEAQQPRGTEKEPPGPTTDGAWGGGRPDAAAPASASTTAPAPRSSRPTEKAFTVPITDVTENALKDLDDVMKTTKIIIGCFVAITFMAAVMLVAFYKLRKQHQLHKHHGPTRTVEIINVEDELPAASAVSVAAAAAVAGGAGVGGDSHLALPALERDHLNHHHYVAAAFKAHYGGNPGGGCGAKGPGLNSIHEPLLFKSGSKENVQETQI.

Residues 1–38 (MAQAHIQGSPCPLLPPGRMSWPQGALLLLWLFSPPLRA) form the signal peptide. The region spanning 50 to 88 (GGGSPPATSCPAACSCSNQASRVICTRRELAEVPASIPV) is the LRRNT domain. 9 LRR repeats span residues 89-110 (NTRY…TFKH), 113-134 (HLEI…AFNG), 137-158 (SLNT…AFEY), 161-182 (KLRE…AFNR), 185-207 (SLRR…AFEG), 210-231 (NLRY…TALV), 232-253 (RLEE…SFQG), 256-277 (SLRK…AFDD), and 280-301 (SLEE…LFTP). An LRRCT domain is found at 313–365 (NPWHCNCDVLWLSWWLKETVPSNTTCCARCHAPAGLKGRYIGELDQSHFTCYA). Residues 366–454 (PVIVEPPTDL…GNTTASATLN (89 aa)) enclose the Ig-like C2-type domain. N-linked (GlcNAc...) asparagine glycosylation is found at Asn376, Asn402, Asn424, Asn427, and Asn446. Residues Cys387 and Cys438 are joined by a disulfide bond. A disordered region spans residues 496-552 (TQPGEEAQQPRGTEKEPPGPTTDGAWGGGRPDAAAPASASTTAPAPRSSRPTEKAFT). A compositionally biased stretch (low complexity) spans 528–544 (AAAPASASTTAPAPRSS). Residues 575 to 595 (IIIGCFVAITFMAAVMLVAFY) traverse the membrane as a helical segment. Ser689 bears the Phosphoserine mark.

In terms of assembly, interacts with PTPRF. Interacts with DLG4. N-glycosylated. O-glycosylated; contains sialic acid. In terms of tissue distribution, mainly expressed in the brain. Widespread distribution in various brain regions (at protein level). Detected both embryonically and postnatally with stronger expression in postnatal stages.

The protein resides in the membrane. It localises to the presynaptic cell membrane. In terms of biological role, synaptic adhesion protein. Regulates the formation of excitatory synapses. The trans-synaptic adhesion between LRRC4B and PTPRF regulates the formation of excitatory synapses in a bidirectional manner. This is Leucine-rich repeat-containing protein 4B (Lrrc4b) from Rattus norvegicus (Rat).